Here is a 251-residue protein sequence, read N- to C-terminus: 3-deoxy-manno-octulosonate cytidylyltransferase (251 aa).

Belongs to the KdsB family.

Its subcellular location is the cytoplasm. It carries out the reaction 3-deoxy-alpha-D-manno-oct-2-ulosonate + CTP = CMP-3-deoxy-beta-D-manno-octulosonate + diphosphate. It functions in the pathway nucleotide-sugar biosynthesis; CMP-3-deoxy-D-manno-octulosonate biosynthesis; CMP-3-deoxy-D-manno-octulosonate from 3-deoxy-D-manno-octulosonate and CTP: step 1/1. The protein operates within bacterial outer membrane biogenesis; lipopolysaccharide biosynthesis. Its function is as follows. Activates KDO (a required 8-carbon sugar) for incorporation into bacterial lipopolysaccharide in Gram-negative bacteria. The protein is 3-deoxy-manno-octulosonate cytidylyltransferase of Geotalea uraniireducens (strain Rf4) (Geobacter uraniireducens).